Here is a 275-residue protein sequence, read N- to C-terminus: NH(3)-dependent NAD(+) synthetase (275 aa).

50-57 contacts ATP; sequence GISGGVDS. Residue Asp-56 coordinates Mg(2+). A deamido-NAD(+)-binding site is contributed by Arg-147. Thr-167 is a binding site for ATP. Residue Glu-172 coordinates Mg(2+). Deamido-NAD(+) is bound by residues Lys-180 and Asp-187. Lys-196 and Thr-218 together coordinate ATP. 267–268 is a binding site for deamido-NAD(+); sequence HK.

Belongs to the NAD synthetase family. Homodimer.

The enzyme catalyses deamido-NAD(+) + NH4(+) + ATP = AMP + diphosphate + NAD(+) + H(+). Its pathway is cofactor biosynthesis; NAD(+) biosynthesis; NAD(+) from deamido-NAD(+) (ammonia route): step 1/1. Its function is as follows. Catalyzes the ATP-dependent amidation of deamido-NAD to form NAD. Uses ammonia as a nitrogen source. The chain is NH(3)-dependent NAD(+) synthetase from Pseudomonas entomophila (strain L48).